The chain runs to 445 residues: Histidinol dehydrogenase (445 aa).

Tyr136, Gln200, and Asn228 together coordinate NAD(+). Residues Thr251, Gln273, and His276 each coordinate substrate. Positions 273 and 276 each coordinate Zn(2+). Catalysis depends on proton acceptor residues Glu342 and His343. Substrate-binding residues include His343, Asp376, Glu430, and His435. Asp376 provides a ligand contact to Zn(2+). His435 provides a ligand contact to Zn(2+).

This sequence belongs to the histidinol dehydrogenase family. Zn(2+) is required as a cofactor.

It catalyses the reaction L-histidinol + 2 NAD(+) + H2O = L-histidine + 2 NADH + 3 H(+). Its pathway is amino-acid biosynthesis; L-histidine biosynthesis; L-histidine from 5-phospho-alpha-D-ribose 1-diphosphate: step 9/9. Catalyzes the sequential NAD-dependent oxidations of L-histidinol to L-histidinaldehyde and then to L-histidine. This chain is Histidinol dehydrogenase (hisD), found in Mycolicibacterium smegmatis (Mycobacterium smegmatis).